The chain runs to 332 residues: Phosphate acyltransferase (332 aa).

The protein belongs to the PlsX family. In terms of assembly, homodimer. Probably interacts with PlsY.

The protein resides in the cytoplasm. It catalyses the reaction a fatty acyl-[ACP] + phosphate = an acyl phosphate + holo-[ACP]. Its pathway is lipid metabolism; phospholipid metabolism. Functionally, catalyzes the reversible formation of acyl-phosphate (acyl-PO(4)) from acyl-[acyl-carrier-protein] (acyl-ACP). This enzyme utilizes acyl-ACP as fatty acyl donor, but not acyl-CoA. The sequence is that of Phosphate acyltransferase from Oceanobacillus iheyensis (strain DSM 14371 / CIP 107618 / JCM 11309 / KCTC 3954 / HTE831).